We begin with the raw amino-acid sequence, 1017 residues long: Anaphase-promoting complex subunit 5 (1017 aa).

5 TPR repeats span residues 30–63 (KQSL…EKEL), 182–214 (DMSM…SPLD), 252–286 (VKRV…VNGQ), 337–370 (PYAV…AQER), and 508–541 (NNNN…WNDI). Residues 451–525 (INSNNYNSNN…NNNSSNSNNN (75 aa)) show a composition bias toward low complexity. Disordered stretches follow at residues 451–527 (INSN…NNGG) and 617–636 (NNNN…QQQN). TPR repeat units follow at residues 642 to 675 (LLSF…YKTQ), 756 to 790 (VICY…SRDF), 838 to 871 (ADSN…VLSD), 876 to 908 (SQLY…FLQL), and 931 to 964 (KEIY…LVPS).

The protein belongs to the APC5 family. The APC/C is composed of at least 13 subunits that stay tightly associated throughout the cell cycle: anapc1, anapc2, anapc3, anapc4, anapc5, anapc6, anapc7, anapc8, anapc10, anapc11, cdc20, cdc26 and cdh1.

It is found in the nucleus. Its pathway is protein modification; protein ubiquitination. Component of the anaphase promoting complex/cyclosome (APC/C), a cell cycle-regulated E3 ubiquitin-protein ligase complex that controls progression through mitosis and the G1 phase of the cell cycle. The sequence is that of Anaphase-promoting complex subunit 5 (anapc5) from Dictyostelium discoideum (Social amoeba).